The sequence spans 375 residues: Riboflavin biosynthesis protein RibD (375 aa).

The interval 1-150 (MEVLSEQQLF…QPYLYQRERG (150 aa)) is deaminase. The CMP/dCMP-type deaminase domain maps to 6-127 (EQQLFFMRKA…ARLQAAGIPV (122 aa)). Residue His-55 participates in Zn(2+) binding. The active-site Proton donor is the Glu-57. Cys-80 and Cys-89 together coordinate Zn(2+). The interval 151–375 (LPWVVMKTAA…LEQESVDKKG (225 aa)) is reductase. Ala-159 serves as a coordination point for NADP(+). Substrate is bound at residue Ser-173. Trp-175 is an NADP(+) binding site. Arg-189 contacts substrate. Residues Thr-201 and Asp-205 each contribute to the NADP(+) site. 2 residues coordinate substrate: Leu-209 and Arg-212. Residue Ser-230 participates in NADP(+) binding. Glu-299 serves as a coordination point for substrate. 301–307 (GAQLHSA) is an NADP(+) binding site.

This sequence in the N-terminal section; belongs to the cytidine and deoxycytidylate deaminase family. The protein in the C-terminal section; belongs to the HTP reductase family. Zn(2+) is required as a cofactor.

The catalysed reaction is 2,5-diamino-6-hydroxy-4-(5-phosphoribosylamino)-pyrimidine + H2O + H(+) = 5-amino-6-(5-phospho-D-ribosylamino)uracil + NH4(+). The enzyme catalyses 5-amino-6-(5-phospho-D-ribitylamino)uracil + NADP(+) = 5-amino-6-(5-phospho-D-ribosylamino)uracil + NADPH + H(+). Its pathway is cofactor biosynthesis; riboflavin biosynthesis; 5-amino-6-(D-ribitylamino)uracil from GTP: step 2/4. The protein operates within cofactor biosynthesis; riboflavin biosynthesis; 5-amino-6-(D-ribitylamino)uracil from GTP: step 3/4. In terms of biological role, converts 2,5-diamino-6-(ribosylamino)-4(3h)-pyrimidinone 5'-phosphate into 5-amino-6-(ribosylamino)-2,4(1h,3h)-pyrimidinedione 5'-phosphate. This is Riboflavin biosynthesis protein RibD (ribD) from Chlamydia trachomatis serovar D (strain ATCC VR-885 / DSM 19411 / UW-3/Cx).